Here is a 200-residue protein sequence, read N- to C-terminus: Holliday junction branch migration complex subunit RuvA (200 aa).

The segment at 1 to 64 (MIAKLKGLLD…ENDMRLLGFA (64 aa)) is domain I. The domain II stretch occupies residues 65–143 (EASERDWFRL…ALPSAPGGAA (79 aa)). The flexible linker stretch occupies residues 144–154 (MAANPAGGASA). Positions 154–200 (ADAVSALENLGFKPAIAARAVATAQGELGEGASESELIRVALKRAAG) are domain III.

This sequence belongs to the RuvA family. As to quaternary structure, homotetramer. Forms an RuvA(8)-RuvB(12)-Holliday junction (HJ) complex. HJ DNA is sandwiched between 2 RuvA tetramers; dsDNA enters through RuvA and exits via RuvB. An RuvB hexamer assembles on each DNA strand where it exits the tetramer. Each RuvB hexamer is contacted by two RuvA subunits (via domain III) on 2 adjacent RuvB subunits; this complex drives branch migration. In the full resolvosome a probable DNA-RuvA(4)-RuvB(12)-RuvC(2) complex forms which resolves the HJ.

The protein resides in the cytoplasm. Its function is as follows. The RuvA-RuvB-RuvC complex processes Holliday junction (HJ) DNA during genetic recombination and DNA repair, while the RuvA-RuvB complex plays an important role in the rescue of blocked DNA replication forks via replication fork reversal (RFR). RuvA specifically binds to HJ cruciform DNA, conferring on it an open structure. The RuvB hexamer acts as an ATP-dependent pump, pulling dsDNA into and through the RuvAB complex. HJ branch migration allows RuvC to scan DNA until it finds its consensus sequence, where it cleaves and resolves the cruciform DNA. This Erythrobacter litoralis (strain HTCC2594) protein is Holliday junction branch migration complex subunit RuvA.